The following is a 395-amino-acid chain: Elongation factor Tu (395 aa).

The tr-type G domain maps to Lys-10–Thr-204. Residues Gly-19–Thr-26 form a G1 region. Gly-19–Thr-26 is a GTP binding site. Residue Thr-26 coordinates Mg(2+). The tract at residues Gly-60–Ala-64 is G2. Residues Asp-81–Gly-84 form a G3 region. GTP is bound by residues Asp-81–His-85 and Asn-136–Asp-139. The tract at residues Asn-136–Asp-139 is G4. The interval Ser-174–Leu-176 is G5.

It belongs to the TRAFAC class translation factor GTPase superfamily. Classic translation factor GTPase family. EF-Tu/EF-1A subfamily. As to quaternary structure, monomer.

It is found in the cytoplasm. The catalysed reaction is GTP + H2O = GDP + phosphate + H(+). Functionally, GTP hydrolase that promotes the GTP-dependent binding of aminoacyl-tRNA to the A-site of ribosomes during protein biosynthesis. This Exiguobacterium sibiricum (strain DSM 17290 / CCUG 55495 / CIP 109462 / JCM 13490 / 255-15) protein is Elongation factor Tu.